A 148-amino-acid polypeptide reads, in one-letter code: UPF0134 protein MPN_204 (148 aa).

The protein belongs to the UPF0134 family.

The protein is UPF0134 protein MPN_204 of Mycoplasma pneumoniae (strain ATCC 29342 / M129 / Subtype 1) (Mycoplasmoides pneumoniae).